Here is a 422-residue protein sequence, read N- to C-terminus: Proline--tRNA ligase (422 aa).

This sequence belongs to the class-II aminoacyl-tRNA synthetase family. ProS type 2 subfamily. In terms of assembly, homodimer.

Its subcellular location is the cytoplasm. It carries out the reaction tRNA(Pro) + L-proline + ATP = L-prolyl-tRNA(Pro) + AMP + diphosphate. Catalyzes the attachment of proline to tRNA(Pro) in a two-step reaction: proline is first activated by ATP to form Pro-AMP and then transferred to the acceptor end of tRNA(Pro). This chain is Proline--tRNA ligase, found in Wolbachia sp. subsp. Drosophila simulans (strain wRi).